Reading from the N-terminus, the 501-residue chain is Type II secretion system protein E (501 aa).

262–269 (GPTGSGKS) lines the ATP pocket. Zn(2+)-binding residues include Cys395, Cys398, Cys428, and Cys431.

This sequence belongs to the GSP E family. As to quaternary structure, forms homooligomers; most probably hexamers. Interacts with ExeL/GspL. Zn(2+) serves as cofactor.

The protein resides in the cell inner membrane. It carries out the reaction ATP + H2O + cellular proteinSide 1 = ADP + phosphate + cellular proteinSide 2.. ATPase component of the type II secretion system required for the energy-dependent secretion of extracellular factors such as proteases and toxins from the periplasm. Acts as a molecular motor to provide the energy that is required for assembly of the pseudopilus and the extrusion of substrates generated in the cytoplasm. The sequence is that of Type II secretion system protein E (exeE) from Aeromonas hydrophila.